A 223-amino-acid polypeptide reads, in one-letter code: Endonuclease V (223 aa).

Mg(2+)-binding residues include D45 and D113.

The protein belongs to the endonuclease V family. It depends on Mg(2+) as a cofactor.

Its subcellular location is the cytoplasm. It catalyses the reaction Endonucleolytic cleavage at apurinic or apyrimidinic sites to products with a 5'-phosphate.. Its function is as follows. DNA repair enzyme involved in the repair of deaminated bases. Selectively cleaves double-stranded DNA at the second phosphodiester bond 3' to a deoxyinosine leaving behind the intact lesion on the nicked DNA. The protein is Endonuclease V of Dehalococcoides mccartyi (strain ATCC BAA-2100 / JCM 16839 / KCTC 5957 / BAV1).